Reading from the N-terminus, the 248-residue chain is Coproheme decarboxylase (248 aa).

Fe-coproporphyrin III is bound by residues arginine 130, tyrosine 144–lysine 148, histidine 171, glutamine 184, and serine 222. Tyrosine 144 is a catalytic residue.

Belongs to the ChdC family. Type 1 subfamily. The cofactor is Fe-coproporphyrin III.

The enzyme catalyses Fe-coproporphyrin III + 2 H2O2 + 2 H(+) = heme b + 2 CO2 + 4 H2O. It catalyses the reaction Fe-coproporphyrin III + H2O2 + H(+) = harderoheme III + CO2 + 2 H2O. The catalysed reaction is harderoheme III + H2O2 + H(+) = heme b + CO2 + 2 H2O. It functions in the pathway porphyrin-containing compound metabolism; protoheme biosynthesis. Involved in coproporphyrin-dependent heme b biosynthesis. Catalyzes the decarboxylation of Fe-coproporphyrin III (coproheme) to heme b (protoheme IX), the last step of the pathway. The reaction occurs in a stepwise manner with a three-propionate intermediate. The chain is Coproheme decarboxylase from Geobacillus sp. (strain WCH70).